Consider the following 52-residue polypeptide: uncharacterized protein (52 aa).

The tract at residues 1–52 (MFGFIYRDPSPAPQGKIRDGSKDPKTPGGGGGGGGGISPNGGAPLGGKGFSM) is disordered. The span at 16–25 (KIRDGSKDPK) shows a compositional bias: basic and acidic residues. The segment covering 27 to 52 (PGGGGGGGGGISPNGGAPLGGKGFSM) has biased composition (gly residues).

This is an uncharacterized protein from Dictyostelium discoideum (Social amoeba).